The chain runs to 424 residues: UPF0415 protein C7orf25 homolog (424 aa).

The protein belongs to the UPF0415 family.

The polypeptide is UPF0415 protein C7orf25 homolog (Xenopus laevis (African clawed frog)).